The chain runs to 334 residues: Trans-1,2-dihydrobenzene-1,2-diol dehydrogenase (334 aa).

It belongs to the Gfo/Idh/MocA family. In terms of assembly, homodimer. As to expression, kidney.

The catalysed reaction is (1R,2R)-1,2-dihydrobenzene-1,2-diol + NADP(+) = catechol + NADPH + H(+). It catalyses the reaction D-xylose + NADP(+) = D-xylono-1,5-lactone + NADPH + H(+). The polypeptide is Trans-1,2-dihydrobenzene-1,2-diol dehydrogenase (DHDH) (Macaca fascicularis (Crab-eating macaque)).